The sequence spans 217 residues: Large ribosomal subunit protein uL3 (217 aa).

The interval 129–161 (SRGPMSHGSKNHRAPGSTGAGTTPGRIYPGKRM) is disordered. Low complexity predominate over residues 142-153 (APGSTGAGTTPG).

The protein belongs to the universal ribosomal protein uL3 family. Part of the 50S ribosomal subunit. Forms a cluster with proteins L14 and L19.

Its function is as follows. One of the primary rRNA binding proteins, it binds directly near the 3'-end of the 23S rRNA, where it nucleates assembly of the 50S subunit. This chain is Large ribosomal subunit protein uL3, found in Prochlorococcus marinus (strain MIT 9515).